The following is a 427-amino-acid chain: Histidine--tRNA ligase (427 aa).

It belongs to the class-II aminoacyl-tRNA synthetase family. Homodimer.

It localises to the cytoplasm. It carries out the reaction tRNA(His) + L-histidine + ATP = L-histidyl-tRNA(His) + AMP + diphosphate + H(+). The polypeptide is Histidine--tRNA ligase (Corynebacterium urealyticum (strain ATCC 43042 / DSM 7109)).